Reading from the N-terminus, the 87-residue chain is Large ribosomal subunit protein bL31B (87 aa).

The protein belongs to the bacterial ribosomal protein bL31 family. Type B subfamily. In terms of assembly, part of the 50S ribosomal subunit.

This Burkholderia pseudomallei (strain 1106a) protein is Large ribosomal subunit protein bL31B.